A 259-amino-acid chain; its full sequence is Aminoglycoside 3'-phosphotransferase (259 aa).

D187 serves as the catalytic Proton acceptor.

Belongs to the aminoglycoside phosphotransferase family.

It catalyses the reaction kanamycin A + ATP = kanamycin 3'-phosphate + ADP + H(+). Resistance to kanamycin and structurally-related aminoglycosides, including amikacin. This is Aminoglycoside 3'-phosphotransferase (aphA-6) from Acinetobacter baumannii.